The chain runs to 342 residues: N-acetyl-gamma-glutamyl-phosphate reductase (342 aa).

Cys-147 is an active-site residue.

The protein belongs to the NAGSA dehydrogenase family. Type 1 subfamily.

It localises to the cytoplasm. It carries out the reaction N-acetyl-L-glutamate 5-semialdehyde + phosphate + NADP(+) = N-acetyl-L-glutamyl 5-phosphate + NADPH + H(+). It participates in amino-acid biosynthesis; L-arginine biosynthesis; N(2)-acetyl-L-ornithine from L-glutamate: step 3/4. In terms of biological role, catalyzes the NADPH-dependent reduction of N-acetyl-5-glutamyl phosphate to yield N-acetyl-L-glutamate 5-semialdehyde. In Campylobacter jejuni subsp. jejuni serotype O:6 (strain 81116 / NCTC 11828), this protein is N-acetyl-gamma-glutamyl-phosphate reductase.